The chain runs to 143 residues: Large ribosomal subunit protein uL11 (143 aa).

Belongs to the universal ribosomal protein uL11 family. As to quaternary structure, part of the ribosomal stalk of the 50S ribosomal subunit. Interacts with L10 and the large rRNA to form the base of the stalk. L10 forms an elongated spine to which L12 dimers bind in a sequential fashion forming a multimeric L10(L12)X complex. One or more lysine residues are methylated.

Its function is as follows. Forms part of the ribosomal stalk which helps the ribosome interact with GTP-bound translation factors. The polypeptide is Large ribosomal subunit protein uL11 (Aromatoleum aromaticum (strain DSM 19018 / LMG 30748 / EbN1) (Azoarcus sp. (strain EbN1))).